A 449-amino-acid chain; its full sequence is 4-aminobutyrate aminotransferase (449 aa).

K294 bears the N6-(pyridoxal phosphate)lysine mark.

This sequence belongs to the class-III pyridoxal-phosphate-dependent aminotransferase family. Pyridoxal 5'-phosphate serves as cofactor.

It carries out the reaction 4-aminobutanoate + 2-oxoglutarate = succinate semialdehyde + L-glutamate. The enzyme catalyses (S)-3-amino-2-methylpropanoate + 2-oxoglutarate = 2-methyl-3-oxopropanoate + L-glutamate. It functions in the pathway amino-acid degradation; 4-aminobutanoate degradation. In Mycobacterium bovis (strain ATCC BAA-935 / AF2122/97), this protein is 4-aminobutyrate aminotransferase (gabT).